The sequence spans 449 residues: Chromosomal replication initiator protein DnaA (449 aa).

The tract at residues 1–71 (MPSSLWKHCL…LLSHYSSGRI (71 aa)) is domain I, interacts with DnaA modulators. Positions 71–112 (IEKALLEVGSCSLQPQPHIQAVELTSKSARSSSRVVDRIPES) are domain II. Residues 113-329 (RLNKNYTFDS…GALRRVIAYS (217 aa)) form a domain III, AAA+ region region. ATP-binding residues include G157, G159, K160, and T161. Residues 330–449 (RFTHRPITME…YHNLLKKLST (120 aa)) are domain IV, binds dsDNA.

Belongs to the DnaA family. In terms of assembly, oligomerizes as a right-handed, spiral filament on DNA at oriC.

The protein localises to the cytoplasm. In terms of biological role, plays an essential role in the initiation and regulation of chromosomal replication. ATP-DnaA binds to the origin of replication (oriC) to initiate formation of the DNA replication initiation complex once per cell cycle. Binds the DnaA box (a 9 base pair repeat at the origin) and separates the double-stranded (ds)DNA. Forms a right-handed helical filament on oriC DNA; dsDNA binds to the exterior of the filament while single-stranded (ss)DNA is stabiized in the filament's interior. The ATP-DnaA-oriC complex binds and stabilizes one strand of the AT-rich DNA unwinding element (DUE), permitting loading of DNA polymerase. After initiation quickly degrades to an ADP-DnaA complex that is not apt for DNA replication. Binds acidic phospholipids. This Nitrosococcus oceani (strain ATCC 19707 / BCRC 17464 / JCM 30415 / NCIMB 11848 / C-107) protein is Chromosomal replication initiator protein DnaA.